Here is a 732-residue protein sequence, read N- to C-terminus: Translation initiation factor eIF2B subunit epsilon (732 aa).

Residues 559-726 (GEEEEDFGVE…QEADEEDSDE (168 aa)) enclose the W2 domain.

It belongs to the eIF-2B gamma/epsilon subunits family. In terms of assembly, component of the translation initiation factor 2B (eIF2B) complex which is a heterodecamer of two sets of five different subunits: alpha, beta, gamma, delta and epsilon. Subunits alpha, beta and delta comprise a regulatory subcomplex and subunits epsilon and gamma comprise a catalytic subcomplex. Within the complex, the hexameric regulatory complex resides at the center, with the two heterodimeric catalytic subcomplexes bound on opposite sides.

Its subcellular location is the cytoplasm. The protein resides in the cytosol. Acts as a component of the translation initiation factor 2B (eIF2B) complex, which catalyzes the exchange of GDP for GTP on the eukaryotic initiation factor 2 (eIF2) complex gamma subunit. Its guanine nucleotide exchange factor activity is repressed when bound to eIF2 complex phosphorylated on the alpha subunit, thereby limiting the amount of methionyl-initiator methionine tRNA available to the ribosome and consequently global translation is repressed. In Candida albicans (strain SC5314 / ATCC MYA-2876) (Yeast), this protein is Translation initiation factor eIF2B subunit epsilon (GCD6).